Here is a 360-residue protein sequence, read N- to C-terminus: Decorin (360 aa).

Positions 1–16 (MKATIIFFLVAQVSWA) are cleaved as a signal peptide. Positions 17 to 30 (GPFQQKGLFDFMLE) are excised as a propeptide. O-linked (Xyl...) (glycosaminoglycan) serine glycosylation occurs at serine 34. 2 cysteine pairs are disulfide-bonded: cysteine 55/cysteine 61 and cysteine 59/cysteine 68. 12 LRR repeats span residues 74 to 94 (EKVP…NNKI), 95 to 118 (TEIK…NNKI), 119 to 142 (SKIS…KNQL), 143 to 163 (KELP…ENEI), 164 to 187 (TKVR…TNPL), 188 to 213 (KSSG…DTNI), 214 to 234 (TTIP…GNKI), 235 to 258 (TKVD…FNSI), 259 to 282 (SAVD…NNKL), 283 to 305 (VKVP…NNNI), 306 to 335 (SAIG…SNPV), and 336 to 360 (QYWE…GNYK). The N-linked (GlcNAc...) asparagine glycan is linked to asparagine 212. N-linked (GlcNAc...) asparagine glycosylation is found at asparagine 263 and asparagine 304. Cysteine 314 and cysteine 347 are joined by a disulfide.

Belongs to the small leucine-rich proteoglycan (SLRP) family. SLRP class I subfamily. Binds to type I and type II collagen, fibronectin and TGF-beta. Forms a ternary complex with MFAP2 and ELN. Interacts with DPT. In terms of processing, the attached glycosaminoglycan chain can be either chondroitin sulfate or dermatan sulfate depending upon the tissue of origin.

The protein resides in the secreted. It localises to the extracellular space. It is found in the extracellular matrix. Functionally, may affect the rate of fibrils formation. The sequence is that of Decorin (DCN) from Ovis aries (Sheep).